The chain runs to 160 residues: Probable cyclic pyranopterin monophosphate synthase (160 aa).

Basic and acidic residues predominate over residues 1–12; it reads MSDDSELTHVTD. Residues 1-24 form a disordered region; sequence MSDDSELTHVTDDGDAQMVDVGEK. Substrate-binding positions include 78 to 80 and 114 to 115; these read MCH and ME. Residue Asp-129 is part of the active site.

This sequence belongs to the MoaC family. Homohexamer; trimer of dimers.

It carries out the reaction (8S)-3',8-cyclo-7,8-dihydroguanosine 5'-triphosphate = cyclic pyranopterin phosphate + diphosphate. It participates in cofactor biosynthesis; molybdopterin biosynthesis. Catalyzes the conversion of (8S)-3',8-cyclo-7,8-dihydroguanosine 5'-triphosphate to cyclic pyranopterin monophosphate (cPMP). The chain is Probable cyclic pyranopterin monophosphate synthase from Natronomonas pharaonis (strain ATCC 35678 / DSM 2160 / CIP 103997 / JCM 8858 / NBRC 14720 / NCIMB 2260 / Gabara) (Halobacterium pharaonis).